Reading from the N-terminus, the 276-residue chain is Probable endonuclease 4 (276 aa).

Zn(2+) is bound by residues His67, His107, Glu142, Asp176, His179, His211, Asp224, His226, and Glu256.

This sequence belongs to the AP endonuclease 2 family. The cofactor is Zn(2+).

It carries out the reaction Endonucleolytic cleavage to 5'-phosphooligonucleotide end-products.. Its function is as follows. Endonuclease IV plays a role in DNA repair. It cleaves phosphodiester bonds at apurinic or apyrimidinic (AP) sites, generating a 3'-hydroxyl group and a 5'-terminal sugar phosphate. The chain is Probable endonuclease 4 from Methanosphaera stadtmanae (strain ATCC 43021 / DSM 3091 / JCM 11832 / MCB-3).